A 76-amino-acid polypeptide reads, in one-letter code: AFAGVLADADIKAALAGCAAADSFNYKTFFKSPEEVKKFFAIIDQDHSGFIEEEELKLFLQTFSAGARALSDAETK.

An N-acetylalanine modification is found at alanine 1. In terms of domain architecture, EF-hand spans 31–66; sequence KSPEEVKKFFAIIDQDHSGFIEEEELKLFLQTFSAG. Residues aspartate 44, aspartate 46, serine 48, phenylalanine 50, glutamate 52, and glutamate 55 each contribute to the Ca(2+) site.

It belongs to the parvalbumin family.

In terms of biological role, in muscle, parvalbumin is thought to be involved in relaxation after contraction. It binds two calcium ions. The protein is Parvalbumin beta 3 of Merluccius polylepis (Southern hake).